We begin with the raw amino-acid sequence, 173 residues long: RTX-III toxin-activating lysine-acyltransferase ApxIIC (173 aa).

Catalysis depends on residues His-29 and Asp-98.

The protein belongs to the RTX toxin acyltransferase family. As to quaternary structure, homodimer.

Its subcellular location is the cytoplasm. The catalysed reaction is a fatty acyl-[ACP] + L-lysyl-[protein] = N(6)-(fatty acyl)-L-lysyl-[protein] + holo-[ACP] + H(+). Its function is as follows. Protein-lysine acyltransferase that catalyzes fatty acylation of the protoxin, thereby converting it to the active toxin. In Actinobacillus pleuropneumoniae (Haemophilus pleuropneumoniae), this protein is RTX-III toxin-activating lysine-acyltransferase ApxIIC (apxIIIC).